A 1013-amino-acid polypeptide reads, in one-letter code: Tolloid-like protein 1 (1013 aa).

Positions 1–30 are cleaved as a signal peptide; that stretch reads MGLQALSPRMLLWLVVSGIVFSRVLWVCAG. A propeptide spanning residues 31 to 147 is cleaved from the precursor; it reads LDYDYTFDGN…EQSEKNRVPR (117 aa). Residues 124-150 form a disordered region; the sequence is QNNTMKGKAPPKLSEQSEKNRVPRAAT. Residues 148–347 enclose the Peptidase M12A domain; the sequence is AATSRTERIW…AQARKLYRCP (200 aa). Asn-169 carries N-linked (GlcNAc...) asparagine glycosylation. Disulfide bonds link Cys-190-Cys-346, Cys-210-Cys-232, Cys-212-Cys-213, and Cys-349-Cys-375. His-240 contributes to the Zn(2+) binding site. Glu-241 is a catalytic residue. His-244 and His-250 together coordinate Zn(2+). CUB domains are found at residues 349-461 and 462-574; these read CGET…YEAI and CGGE…FFKE. N-linked (GlcNAc...) asparagine glycans are attached at residues Asn-359 and Asn-390. 15 disulfide bridges follow: Cys-402-Cys-424, Cys-462-Cys-488, Cys-515-Cys-537, Cys-578-Cys-590, Cys-586-Cys-599, Cys-601-Cys-614, Cys-618-Cys-644, Cys-671-Cys-693, Cys-734-Cys-745, Cys-741-Cys-754, Cys-756-Cys-769, Cys-774-Cys-800, Cys-827-Cys-849, Cys-887-Cys-917, and Cys-944-Cys-966. The EGF-like 1; calcium-binding domain occupies 574–615; that stretch reads EEDECAKPDRGGCEQRCLNTLGSYQCACEPGYELGPDRRSCE. Positions 618 to 730 constitute a CUB 3 domain; the sequence is CGGLLTKLNG…KGFKAHFFSD (113 aa). The N-linked (GlcNAc...) asparagine glycan is linked to Asn-626. Residues 730–770 enclose the EGF-like 2; calcium-binding domain; that stretch reads DKDECSKDNGGCQHECVNTMGSYTCQCRNGFVLHENKHDCK. 2 consecutive CUB domains span residues 774-886 and 887-1003; these read CEQK…HSTE and CGGR…YKSI.

The cofactor is Zn(2+). As to expression, highly expressed in brain and kidney and weakly in lung, skeletal muscle. A perceptible level of expression is observed in heart and testis.

Its subcellular location is the secreted. Protease which processes procollagen C-propeptides, such as chordin, pro-biglycan and pro-lysyl oxidase. Required for the embryonic development, especially heart development. Predominant protease, which in the development, influences dorsal-ventral patterning and skeletogenesis. This is Tolloid-like protein 1 (Tll1) from Mus musculus (Mouse).